Reading from the N-terminus, the 118-residue chain is Large ribosomal subunit protein bL20 (118 aa).

This sequence belongs to the bacterial ribosomal protein bL20 family.

In terms of biological role, binds directly to 23S ribosomal RNA and is necessary for the in vitro assembly process of the 50S ribosomal subunit. It is not involved in the protein synthesizing functions of that subunit. The protein is Large ribosomal subunit protein bL20 of Caldicellulosiruptor saccharolyticus (strain ATCC 43494 / DSM 8903 / Tp8T 6331).